The chain runs to 649 residues: Threonine--tRNA ligase (649 aa).

The region spanning 1–61 is the TGS domain; that stretch reads MIKITFPDGA…TQDGSIEIVT (61 aa). Residues 242–540 form a catalytic region; that stretch reads DHRKLGKELD…LIETYKGAFP (299 aa). The Zn(2+) site is built by cysteine 336, histidine 387, and histidine 517.

The protein belongs to the class-II aminoacyl-tRNA synthetase family. Homodimer. Zn(2+) is required as a cofactor.

It localises to the cytoplasm. It carries out the reaction tRNA(Thr) + L-threonine + ATP = L-threonyl-tRNA(Thr) + AMP + diphosphate + H(+). Catalyzes the attachment of threonine to tRNA(Thr) in a two-step reaction: L-threonine is first activated by ATP to form Thr-AMP and then transferred to the acceptor end of tRNA(Thr). Also edits incorrectly charged L-seryl-tRNA(Thr). This chain is Threonine--tRNA ligase, found in Streptococcus mutans serotype c (strain ATCC 700610 / UA159).